Reading from the N-terminus, the 459-residue chain is Trigger factor (459 aa).

The region spanning 166-245 is the PPIase FKBP-type domain; it reads GDFANIDLTA…VNSVKAEELP (80 aa).

The protein belongs to the FKBP-type PPIase family. Tig subfamily.

The protein resides in the cytoplasm. It catalyses the reaction [protein]-peptidylproline (omega=180) = [protein]-peptidylproline (omega=0). In terms of biological role, involved in protein export. Acts as a chaperone by maintaining the newly synthesized protein in an open conformation. Functions as a peptidyl-prolyl cis-trans isomerase. This is Trigger factor from Bifidobacterium longum (strain NCC 2705).